A 500-amino-acid polypeptide reads, in one-letter code: NAD(P)H-quinone oxidoreductase chain 4, chloroplastic (500 aa).

Helical transmembrane passes span 4–24, 35–55, 87–107, 113–130, 134–154, 167–187, 211–231, 242–262, 272–292, 305–325, 330–350, 364–384, 386–406, 416–436, and 463–483; these read FPWL…IFFL, YTIF…CYHF, IGPI…AWPV, LFNF…GLFS, LLLF…LLSM, FILY…GIGL, IIFY…IPLH, HYST…YGLV, AHSI…IYAA, IAYS…SITD, GALL…FLAG, MGGI…FSMA, LALP…GIIT, ILIT…SLSM, and FLSI…DFIF.

The protein belongs to the complex I subunit 4 family.

It is found in the plastid. It localises to the chloroplast thylakoid membrane. It carries out the reaction a plastoquinone + NADH + (n+1) H(+)(in) = a plastoquinol + NAD(+) + n H(+)(out). The enzyme catalyses a plastoquinone + NADPH + (n+1) H(+)(in) = a plastoquinol + NADP(+) + n H(+)(out). This is NAD(P)H-quinone oxidoreductase chain 4, chloroplastic from Coffea arabica (Arabian coffee).